Consider the following 199-residue polypeptide: 7-methyl-GTP pyrophosphatase (199 aa).

Asp76 acts as the Proton acceptor in catalysis.

Belongs to the Maf family. YceF subfamily. A divalent metal cation serves as cofactor.

The protein localises to the cytoplasm. The catalysed reaction is N(7)-methyl-GTP + H2O = N(7)-methyl-GMP + diphosphate + H(+). Nucleoside triphosphate pyrophosphatase that hydrolyzes 7-methyl-GTP (m(7)GTP). May have a dual role in cell division arrest and in preventing the incorporation of modified nucleotides into cellular nucleic acids. This is 7-methyl-GTP pyrophosphatase from Rhizobium meliloti (strain 1021) (Ensifer meliloti).